A 996-amino-acid chain; its full sequence is GPI ethanolamine phosphate transferase 1 (996 aa).

Topologically, residues 1 to 8 (MAAFPRFR) are cytoplasmic. A helical membrane pass occupies residues 9–29 (FLAIAVIFHFAYIFSIFDIYF). Over 30–463 (VSPIETGMRL…LQTYDWLFLR (434 aa)) the chain is Lumenal. Residues asparagine 47, asparagine 147, and asparagine 210 are each glycosylated (N-linked (GlcNAc...) asparagine). Residues 464–484 (ALITIGYLGWIAYALTTVVDL) traverse the membrane as a helical segment. Residues 485–495 (HVLHGRVRPSR) are Cytoplasmic-facing. Residues 496–516 (TLGGGLFFTSVLVALYASLVI) form a helical membrane-spanning segment. The Lumenal portion of the chain corresponds to 517–518 (SK). The helical transmembrane segment at 519 to 539 (SPLTYYVYAFFPVFFWEEVYA) threads the bilayer. Topologically, residues 540–560 (HRESLAAGRKELLGHINSGGS) are cytoplasmic. Residues 561-581 (VASFVLNSALYVGVIESLALG) form a helical membrane-spanning segment. Residues 582-586 (YIHRE) are Lumenal-facing. A helical membrane pass occupies residues 587–607 (ILSVLFVLGSFWPFTHGLSFL). At 608 to 612 (KKHGA) the chain is on the cytoplasmic side. A helical transmembrane segment spans residues 613–633 (LSATWFLACIAMSTFTLLPAM). The Lumenal segment spans residues 634–637 (KAEN). Residues 638–658 (VNLITIGGVLMVVIGLLYLIF) form a helical membrane-spanning segment. Topologically, residues 659–681 (EDFVLADFSWNAKPTSRNHLSRS) are cytoplasmic. The helical transmembrane segment at 682–702 (LVGIQVGLTVLSIIITRSSAL) threads the bilayer. Over 703 to 715 (SLQAKQGLPRGNQ) the chain is Lumenal. The helical transmembrane segment at 716-734 (IMGWVTLVASLLMPLAYRL) threads the bilayer. Over 735–754 (RPNNHYMHRILVIFLTCAPT) the chain is Cytoplasmic. The helical transmembrane segment at 755-775 (FVILTISYEGLFYLVFSALLV) threads the bilayer. Topologically, residues 776 to 822 (SWVRLEHAVQKFTSSKAPQTAATKKPTTTTESHLPAPFRPLTLHDAR) are lumenal. A helical transmembrane segment spans residues 823–843 (VALFFFILLQSAFFSTGNVAS). Residues 844 to 865 (VSSFSLDSVYRLIPIFDPFSQG) lie on the Cytoplasmic side of the membrane. Residues 866–886 (AMLILKLMIPFALISANLGIL) form a helical membrane-spanning segment. Residues 887 to 895 (NKRLGVAPS) are Lumenal-facing. A helical transmembrane segment spans residues 896–916 (ALFMVVMGISDILTLYFFWVV). Topologically, residues 917 to 932 (KDEGSWLEIGSTISHF) are cytoplasmic. The chain crosses the membrane as a helical span at residues 933 to 953 (VIASLLCVFVSALEPVSAAFI). The Lumenal portion of the chain corresponds to 954–996 (AGVEVGEESELKEEGKVAEKVVEKVNEAVEGLVSGGDGGGDES).

This sequence belongs to the PIGG/PIGN/PIGO family. PIGN subfamily.

The protein localises to the endoplasmic reticulum membrane. It functions in the pathway glycolipid biosynthesis; glycosylphosphatidylinositol-anchor biosynthesis. Functionally, ethanolamine phosphate transferase involved in glycosylphosphatidylinositol-anchor biosynthesis. Transfers ethanolamine phosphate to the first alpha-1,4-linked mannose of the glycosylphosphatidylinositol precursor of GPI-anchor. The sequence is that of GPI ethanolamine phosphate transferase 1 (mcd-4) from Neurospora crassa (strain ATCC 24698 / 74-OR23-1A / CBS 708.71 / DSM 1257 / FGSC 987).